A 371-amino-acid chain; its full sequence is GTPase Obg (371 aa).

In terms of domain architecture, Obg spans 1–159 (MKFLDQAKVY…KTIWLRLKLI (159 aa)). Residues 160-327 (ADAGLVGLPN…VLRALRDIIV (168 aa)) enclose the OBG-type G domain. GTP contacts are provided by residues 166–173 (GLPNAGKS), 191–195 (FTTLH), 212–215 (DIPG), 279–282 (SQID), and 308–310 (SAI). Positions 173 and 193 each coordinate Mg(2+). The tract at residues 337 to 371 (APMKALKVRHRDMQSSGNEGESEDNSDRDDEEQQG) is disordered. Residues 356-371 (GESEDNSDRDDEEQQG) are compositionally biased toward acidic residues.

The protein belongs to the TRAFAC class OBG-HflX-like GTPase superfamily. OBG GTPase family. Monomer. The cofactor is Mg(2+).

The protein localises to the cytoplasm. An essential GTPase which binds GTP, GDP and possibly (p)ppGpp with moderate affinity, with high nucleotide exchange rates and a fairly low GTP hydrolysis rate. Plays a role in control of the cell cycle, stress response, ribosome biogenesis and in those bacteria that undergo differentiation, in morphogenesis control. The sequence is that of GTPase Obg from Rhizobium rhizogenes (strain K84 / ATCC BAA-868) (Agrobacterium radiobacter).